Here is a 414-residue protein sequence, read N- to C-terminus: 3-isopropylmalate dehydratase large subunit (414 aa).

[4Fe-4S] cluster contacts are provided by Cys295, Cys353, and Cys356.

This sequence belongs to the aconitase/IPM isomerase family. LeuC type 2 subfamily. As to quaternary structure, heterodimer of LeuC and LeuD. Requires [4Fe-4S] cluster as cofactor.

It catalyses the reaction (2R,3S)-3-isopropylmalate = (2S)-2-isopropylmalate. The protein operates within amino-acid biosynthesis; L-leucine biosynthesis; L-leucine from 3-methyl-2-oxobutanoate: step 2/4. Functionally, catalyzes the isomerization between 2-isopropylmalate and 3-isopropylmalate, via the formation of 2-isopropylmaleate. The polypeptide is 3-isopropylmalate dehydratase large subunit (Pyrobaculum islandicum (strain DSM 4184 / JCM 9189 / GEO3)).